A 396-amino-acid polypeptide reads, in one-letter code: Nucleolar protein 12 (396 aa).

Residues 43-104 (TDKDADGDEK…GKESKKSTKE (62 aa)) form a disordered region. The segment covering 47 to 58 (ADGDEKMEDAAS) has biased composition (acidic residues). Residues 64 to 73 (KKPSKKKLAK) are compositionally biased toward basic residues. Residues 87–104 (EPEKLVEEGKESKKSTKE) are compositionally biased toward basic and acidic residues. 2 RRM domains span residues 112 to 220 (RTIF…SITH) and 228 to 312 (RSVF…RCKN). Positions 361–396 (TKDDSKPVLKKGKKERSKTGRVTKRSQAFKKSQQKK) are disordered. A compositionally biased stretch (basic residues) spans 368-396 (VLKKGKKERSKTGRVTKRSQAFKKSQQKK).

The protein belongs to the RRM RBM34 family.

Its subcellular location is the nucleus. The protein localises to the nucleolus. In terms of biological role, involved in pre-25S rRNA processing. The chain is Nucleolar protein 12 (NOP12) from Candida glabrata (strain ATCC 2001 / BCRC 20586 / JCM 3761 / NBRC 0622 / NRRL Y-65 / CBS 138) (Yeast).